Reading from the N-terminus, the 249-residue chain is Transcription initiation factor TFIID subunit 9B (249 aa).

At methionine 1 the chain carries N-acetylmethionine. Serine 147 carries the phosphoserine modification. Positions 148-171 (AVSSRPTTPPVAPPQAVSGPNKAA) are disordered. Position 172 is a phosphothreonine (threonine 172). Serine 175 carries the phosphoserine modification. Positions 224-234 (VSSQNTATDSN) are enriched in polar residues. The tract at residues 224 to 249 (VSSQNTATDSNPLKRKHDDDDDNDTM) is disordered.

The protein belongs to the TAF9 family. Binds TAF5 and TAF6. Component of TFIID and the TATA-binding protein-free TAF complex (TFTC). TFIID is composed of TATA binding protein (TBP) and a number of TBP-associated factors (TAFs). Binds N-terminal domain of p53/TP53 which is essential for transcription.

The protein localises to the nucleus. Functionally, essential for cell viability. TAF9 and TAF9B are involved in transcriptional activation as well as repression of distinct but overlapping sets of genes. May have a role in gene regulation associated with apoptosis. TAFs are components of the transcription factor IID (TFIID) complex, the TBP-free TAFII complex (TFTC), the PCAF histone acetylase complex and the STAGA transcription coactivator-HAT complex. TFIID or TFTC are essential for the regulation of RNA polymerase II-mediated transcription. In Mus musculus (Mouse), this protein is Transcription initiation factor TFIID subunit 9B (Taf9b).